A 150-amino-acid chain; its full sequence is Protein adenylyltransferase MntA (150 aa).

Positions 32-46 (GSRATGNINANSDWD) match the GSX(10)DXD motif motif. Catalysis depends on residues Asp-44 and Asp-46. The Mg(2+) site is built by Asp-44, Asp-46, and Asp-86.

It belongs to the MntA antitoxin family. In terms of assembly, forms a complex with HepT, probably MntA(1):HepT(2) in vivo; can only be purified when both 'Arg-102' and 'Tyr-109' (or 'His-107' and 'Tyr-109') of HepThave been mutated. The fully di-AMPylated HepT homodimer is not found in a complex with MntA. It depends on Mg(2+) as a cofactor.

The catalysed reaction is L-tyrosyl-[protein] + ATP = O-(5'-adenylyl)-L-tyrosyl-[protein] + diphosphate. The enzyme catalyses O-(5'-adenylyl)-L-tyrosyl-[protein] + ATP = O-[5'-(adenylyl-(5'-&gt;3')-adenylyl)]-L-tyrosyl-[protein] + diphosphate. Antitoxin component of a type VII toxin-antitoxin (TA) system. Upon cloning in E.coli neutralizes the effect of cognate toxin HepT. Neutralization is mostly due to di-AMPylation of toxin by this enzyme. Successively di-AMPylates HepT on 'Tyr-109'. In vitro will use ATP, dATP, GTP, dGTP, TTP or UTP to generate a mono-modified protein, but requires a purine nucleotide for the second modification reaction (ATP, dATP or GTP). The polypeptide is Protein adenylyltransferase MntA (Aphanizomenon flos-aquae (strain 2012/KM1/D3)).